Reading from the N-terminus, the 152-residue chain is SsrA-binding protein (152 aa).

This sequence belongs to the SmpB family.

It is found in the cytoplasm. Required for rescue of stalled ribosomes mediated by trans-translation. Binds to transfer-messenger RNA (tmRNA), required for stable association of tmRNA with ribosomes. tmRNA and SmpB together mimic tRNA shape, replacing the anticodon stem-loop with SmpB. tmRNA is encoded by the ssrA gene; the 2 termini fold to resemble tRNA(Ala) and it encodes a 'tag peptide', a short internal open reading frame. During trans-translation Ala-aminoacylated tmRNA acts like a tRNA, entering the A-site of stalled ribosomes, displacing the stalled mRNA. The ribosome then switches to translate the ORF on the tmRNA; the nascent peptide is terminated with the 'tag peptide' encoded by the tmRNA and targeted for degradation. The ribosome is freed to recommence translation, which seems to be the essential function of trans-translation. The protein is SsrA-binding protein of Rickettsia africae (strain ESF-5).